Consider the following 372-residue polypeptide: Queuine tRNA-ribosyltransferase (372 aa).

The Proton acceptor role is filled by Asp92. Residues 92–96 (DSGGY), Asp146, Gln188, and Gly215 contribute to the substrate site. The interval 246-252 (GIGSLRE) is RNA binding. Asp265 (nucleophile) is an active-site residue. An RNA binding; important for wobble base 34 recognition region spans residues 270-274 (TRLGR). Cys303, Cys305, Cys308, and His334 together coordinate Zn(2+).

Belongs to the queuine tRNA-ribosyltransferase family. In terms of assembly, homodimer. Within each dimer, one monomer is responsible for RNA recognition and catalysis, while the other monomer binds to the replacement base PreQ1. Zn(2+) serves as cofactor.

The enzyme catalyses 7-aminomethyl-7-carbaguanine + guanosine(34) in tRNA = 7-aminomethyl-7-carbaguanosine(34) in tRNA + guanine. It participates in tRNA modification; tRNA-queuosine biosynthesis. Its function is as follows. Catalyzes the base-exchange of a guanine (G) residue with the queuine precursor 7-aminomethyl-7-deazaguanine (PreQ1) at position 34 (anticodon wobble position) in tRNAs with GU(N) anticodons (tRNA-Asp, -Asn, -His and -Tyr). Catalysis occurs through a double-displacement mechanism. The nucleophile active site attacks the C1' of nucleotide 34 to detach the guanine base from the RNA, forming a covalent enzyme-RNA intermediate. The proton acceptor active site deprotonates the incoming PreQ1, allowing a nucleophilic attack on the C1' of the ribose to form the product. After dissociation, two additional enzymatic reactions on the tRNA convert PreQ1 to queuine (Q), resulting in the hypermodified nucleoside queuosine (7-(((4,5-cis-dihydroxy-2-cyclopenten-1-yl)amino)methyl)-7-deazaguanosine). The polypeptide is Queuine tRNA-ribosyltransferase (Prochlorococcus marinus (strain MIT 9215)).